We begin with the raw amino-acid sequence, 355 residues long: MLADRLKPFLKRYDEISESLSDPKILSDISLVTKLSKEQRSIEPVRNATLQYLEVLKNIEDNKSLINDTELGDLAKEELKNLEISQNKLEEEIKILLIPKDPNDEKNIFLEIRAGTGGDEAALFAGDLLDAYLRYAELRGYKTEIVSQSEGSAGGFKEVILLVKGDGAYSRLKFEGGTHRVQRVPETESQGRVHTSAITVAIMPEIEDSEIQINENDLRIDVMRASGHGGQCVNTTDSAVRITHIPTGLVVTNQDGKSQHKNKEAAMKVLKARLYDLQEKERKAKEQSERKDQVGTGDRSGRIRTYNYPQNRITDHRINLTLYRLDAIMAGGLFDEIIDPLIAHAQAEAINKSEI.

Gln231 carries the post-translational modification N5-methylglutamine. Basic and acidic residues predominate over residues 280 to 293 (KERKAKEQSERKDQ). The tract at residues 280–307 (KERKAKEQSERKDQVGTGDRSGRIRTYN) is disordered.

It belongs to the prokaryotic/mitochondrial release factor family. In terms of processing, methylated by PrmC. Methylation increases the termination efficiency of RF1.

The protein localises to the cytoplasm. Peptide chain release factor 1 directs the termination of translation in response to the peptide chain termination codons UAG and UAA. The protein is Peptide chain release factor 1 of Campylobacter hominis (strain ATCC BAA-381 / DSM 21671 / CCUG 45161 / LMG 19568 / NCTC 13146 / CH001A).